A 330-amino-acid chain; its full sequence is Aspartate--ammonia ligase (330 aa).

It belongs to the class-II aminoacyl-tRNA synthetase family. AsnA subfamily.

It localises to the cytoplasm. It catalyses the reaction L-aspartate + NH4(+) + ATP = L-asparagine + AMP + diphosphate + H(+). The protein operates within amino-acid biosynthesis; L-asparagine biosynthesis; L-asparagine from L-aspartate (ammonia route): step 1/1. The chain is Aspartate--ammonia ligase from Streptococcus pneumoniae serotype 2 (strain D39 / NCTC 7466).